Reading from the N-terminus, the 380-residue chain is Flap endonuclease 1 (380 aa).

Residues 1-104 (MGIQGLAKLI…GELAKRAERR (104 aa)) are N-domain. Residue D34 participates in Mg(2+) binding. DNA is bound by residues R47 and R70. Mg(2+) is bound by residues D86, E158, E160, D179, and D181. The interval 122–253 (DVNKFQKRLV…KRAIELIRQY (132 aa)) is I-domain. E158 contributes to the DNA binding site. DNA contacts are provided by G231 and D233. D233 lines the Mg(2+) pocket. Residues 328 to 380 (LKNARHTSTQGRLDSFFKVMSSPSVKRKEPPKGAKGSASKKAKMSGGKFKKPK) are disordered. The tract at residues 336-344 (TQGRLDSFF) is interaction with PCNA. Over residues 365–380 (ASKKAKMSGGKFKKPK) the composition is skewed to basic residues.

This sequence belongs to the XPG/RAD2 endonuclease family. FEN1 subfamily. In terms of assembly, interacts with PCNA. Three molecules of FEN1 bind to one PCNA trimer with each molecule binding to one PCNA monomer. PCNA stimulates the nuclease activity without altering cleavage specificity. Mg(2+) serves as cofactor. Phosphorylated. Phosphorylation upon DNA damage induces relocalization to the nuclear plasma.

It is found in the nucleus. It localises to the nucleolus. The protein resides in the nucleoplasm. The protein localises to the mitochondrion. Its function is as follows. Structure-specific nuclease with 5'-flap endonuclease and 5'-3' exonuclease activities involved in DNA replication and repair. During DNA replication, cleaves the 5'-overhanging flap structure that is generated by displacement synthesis when DNA polymerase encounters the 5'-end of a downstream Okazaki fragment. It enters the flap from the 5'-end and then tracks to cleave the flap base, leaving a nick for ligation. Also involved in the long patch base excision repair (LP-BER) pathway, by cleaving within the apurinic/apyrimidinic (AP) site-terminated flap. Acts as a genome stabilization factor that prevents flaps from equilibrating into structures that lead to duplications and deletions. Also possesses 5'-3' exonuclease activity on nicked or gapped double-stranded DNA, and exhibits RNase H activity. Also involved in replication and repair of rDNA and in repairing mitochondrial DNA. This Branchiostoma floridae (Florida lancelet) protein is Flap endonuclease 1.